We begin with the raw amino-acid sequence, 320 residues long: Reticulocalbin-2 (320 aa).

The first 25 residues, 1-25 (MRLGPRPAVLGLLLLLLLYAAVAGA), serve as a signal peptide directing secretion. 2 EF-hand domains span residues 64–99 (EQQR…SFKH) and 100–135 (YAMQ…RVID). Ca(2+) is bound by residues Asp77, Asp79, Asp81, Glu88, Asp113, Asn115, Asp117, Thr119, and Glu124. Thr140 bears the Phosphothreonine mark. EF-hand domains lie at 150 to 185 (FRQL…HPEE), 189 to 224 (MTEF…DPTA), 230 to 265 (WILV…NNQG), and 266 to 301 (IAQE…FLTS). Ca(2+)-binding residues include Asp167, Glu176, Asp202, Asn204, Asp206, Glu213, Asp243, Asp245, Asp247, Arg249, Glu254, Asp279, Asn281, Asp283, Lys285, and Glu290. Residues 317–320 (HDEL) carry the Prevents secretion from ER motif.

It belongs to the CREC family. As to quaternary structure, binds the snake venom phospholipase complex taipoxin. As to expression, ubiquitous.

The protein localises to the endoplasmic reticulum lumen. Functionally, not known. Binds calcium. The protein is Reticulocalbin-2 (Rcn2) of Rattus norvegicus (Rat).